The sequence spans 197 residues: Holliday junction branch migration complex subunit RuvA (197 aa).

The interval 1–64 is domain I; that stretch reads MIGRISGLLL…EDAHLLFGFA (64 aa). A domain II region spans residues 65 to 142; that stretch reads TEGERQAFRQ…DLGVSAIPGA (78 aa). The segment at 143-153 is flexible linker; it reads AGARRPSTMGS. The tract at residues 153-197 is domain III; sequence SDVLNALLSLGYNDREANWAVSQLSVDLSVSDGIRQALKFLSKEK.

Belongs to the RuvA family. As to quaternary structure, homotetramer. Forms an RuvA(8)-RuvB(12)-Holliday junction (HJ) complex. HJ DNA is sandwiched between 2 RuvA tetramers; dsDNA enters through RuvA and exits via RuvB. An RuvB hexamer assembles on each DNA strand where it exits the tetramer. Each RuvB hexamer is contacted by two RuvA subunits (via domain III) on 2 adjacent RuvB subunits; this complex drives branch migration. In the full resolvosome a probable DNA-RuvA(4)-RuvB(12)-RuvC(2) complex forms which resolves the HJ.

The protein resides in the cytoplasm. The RuvA-RuvB-RuvC complex processes Holliday junction (HJ) DNA during genetic recombination and DNA repair, while the RuvA-RuvB complex plays an important role in the rescue of blocked DNA replication forks via replication fork reversal (RFR). RuvA specifically binds to HJ cruciform DNA, conferring on it an open structure. The RuvB hexamer acts as an ATP-dependent pump, pulling dsDNA into and through the RuvAB complex. HJ branch migration allows RuvC to scan DNA until it finds its consensus sequence, where it cleaves and resolves the cruciform DNA. This chain is Holliday junction branch migration complex subunit RuvA, found in Nitrosospira multiformis (strain ATCC 25196 / NCIMB 11849 / C 71).